The following is a 194-amino-acid chain: Molybdenum cofactor guanylyltransferase (194 aa).

GTP is bound by residues 12-14 (LAG), K25, N53, D71, and D101. D101 contacts Mg(2+).

This sequence belongs to the MobA family. Monomer. It depends on Mg(2+) as a cofactor.

It is found in the cytoplasm. The catalysed reaction is Mo-molybdopterin + GTP + H(+) = Mo-molybdopterin guanine dinucleotide + diphosphate. Transfers a GMP moiety from GTP to Mo-molybdopterin (Mo-MPT) cofactor (Moco or molybdenum cofactor) to form Mo-molybdopterin guanine dinucleotide (Mo-MGD) cofactor. This Escherichia coli O157:H7 protein is Molybdenum cofactor guanylyltransferase.